A 106-amino-acid polypeptide reads, in one-letter code: Cell division topological specificity factor (106 aa).

It belongs to the MinE family.

Its function is as follows. Prevents the cell division inhibition by proteins MinC and MinD at internal division sites while permitting inhibition at polar sites. This ensures cell division at the proper site by restricting the formation of a division septum at the midpoint of the long axis of the cell. This Prochlorococcus marinus subsp. pastoris (strain CCMP1986 / NIES-2087 / MED4) protein is Cell division topological specificity factor.